Consider the following 302-residue polypeptide: Acetyl-coenzyme A carboxylase carboxyl transferase subunit beta (302 aa).

The 270-residue stretch at 25–294 (VWTKCDSCGQ…PHFDEAAPVS (270 aa)) folds into the CoA carboxyltransferase N-terminal domain. Zn(2+) contacts are provided by Cys29, Cys32, Cys48, and Cys51. The C4-type zinc-finger motif lies at 29-51 (CDSCGQVLYRAELERNLEVCPKC). Residues 281 to 302 (NQPQPHFDEAAPVSEQENQADA) form a disordered region.

It belongs to the AccD/PCCB family. In terms of assembly, acetyl-CoA carboxylase is a heterohexamer composed of biotin carboxyl carrier protein (AccB), biotin carboxylase (AccC) and two subunits each of ACCase subunit alpha (AccA) and ACCase subunit beta (AccD). Zn(2+) serves as cofactor.

The protein localises to the cytoplasm. It carries out the reaction N(6)-carboxybiotinyl-L-lysyl-[protein] + acetyl-CoA = N(6)-biotinyl-L-lysyl-[protein] + malonyl-CoA. It functions in the pathway lipid metabolism; malonyl-CoA biosynthesis; malonyl-CoA from acetyl-CoA: step 1/1. In terms of biological role, component of the acetyl coenzyme A carboxylase (ACC) complex. Biotin carboxylase (BC) catalyzes the carboxylation of biotin on its carrier protein (BCCP) and then the CO(2) group is transferred by the transcarboxylase to acetyl-CoA to form malonyl-CoA. The polypeptide is Acetyl-coenzyme A carboxylase carboxyl transferase subunit beta (Serratia proteamaculans (strain 568)).